The primary structure comprises 63 residues: Large ribosomal subunit protein uL29 (63 aa).

It belongs to the universal ribosomal protein uL29 family.

The sequence is that of Large ribosomal subunit protein uL29 from Pectobacterium carotovorum subsp. carotovorum (strain PC1).